Reading from the N-terminus, the 648-residue chain is Phosphatidylinositol-3,5-bisphosphate 3-phosphatase MTMR14 (648 aa).

A compositionally biased stretch (low complexity) spans 1-19 (MAGARAAAAASAGSTASSG). The tract at residues 1 to 27 (MAGARAAAAASAGSTASSGSPPPQEPG) is disordered. Residue Lys193 is modified to N6-acetyllysine. N-linked (GlcNAc...) asparagine glycans are attached at residues Asn225 and Asn240. The Phosphocysteine intermediate role is filled by Cys329. 5 residues coordinate a 1,2-diacyl-sn-glycero-3-phospho-(1D-myo-inositol-3,5-bisphosphate): Gly332, Trp333, Asp334, Arg335, and Arg381. Positions 332, 333, 334, 335, and 381 each coordinate a 1,2-diacyl-sn-glycero-3-phospho-(1D-myo-inositol-3-phosphate). Residues 471 to 544 (PTQAAWRKSH…PRSVDHPLPG (74 aa)) form a disordered region. Positions 494 to 506 (PSEERLPSHHGLT) are enriched in basic and acidic residues. At Ser516 the chain carries Phosphoserine. Asn517 carries an N-linked (GlcNAc...) asparagine glycan. Phosphoserine is present on residues Ser528, Ser578, and Ser622. Arg636 is modified (omega-N-methylarginine).

Belongs to the protein-tyrosine phosphatase family. Non-receptor class myotubularin subfamily.

The protein resides in the cytoplasm. It carries out the reaction a 1,2-diacyl-sn-glycero-3-phospho-(1D-myo-inositol-3,5-bisphosphate) + H2O = a 1,2-diacyl-sn-glycero-3-phospho-(1D-myo-inositol-5-phosphate) + phosphate. It catalyses the reaction a 1,2-diacyl-sn-glycero-3-phospho-(1D-myo-inositol-3-phosphate) + H2O = a 1,2-diacyl-sn-glycero-3-phospho-(1D-myo-inositol) + phosphate. Lipid phosphatase that specifically dephosphorylates the D-3 position of phosphatidylinositol 3-phosphate and phosphatidylinositol 3,5-bisphosphate, generating phosphatidylinositol and phosphatidylinositol 5-phosphate. This chain is Phosphatidylinositol-3,5-bisphosphate 3-phosphatase MTMR14, found in Mus musculus (Mouse).